Here is a 256-residue protein sequence, read N- to C-terminus: Small ribosomal subunit protein eS1 (256 aa).

A2 bears the N-acetylalanine; partial mark.

This sequence belongs to the eukaryotic ribosomal protein eS1 family. In terms of assembly, component of the small ribosomal subunit. Mature ribosomes consist of a small (40S) and a large (60S) subunit. The 40S subunit contains about 33 different proteins and 1 molecule of RNA (18S). The 60S subunit contains about 49 different proteins and 3 molecules of RNA (25S, 5.8S and 5S).

It is found in the cytoplasm. This chain is Small ribosomal subunit protein eS1 (rps1), found in Botryotinia fuckeliana (strain B05.10) (Noble rot fungus).